The sequence spans 644 residues: Neurofilament medium polypeptide (644 aa).

The tract at residues 1 to 33 (VKVELDKKVQSLQDEVAFLRTNHEEEVADLLAQ) is coil 1B. Residues 1–197 (VKVELDKKVQ…KLLEGEETRF (197 aa)) enclose the IF rod domain. At Ser-11 the chain carries Phosphoserine. The tract at residues 34–50 (IQASHITVERKDYLKTD) is linker 12. Positions 51–72 (ISSALKEIRSQLECHSDQNMHQ) are coil 2A. The interval 73 to 76 (AEEW) is linker 2. Positions 77-197 (FKCRYAKLTE…KLLEGEETRF (121 aa)) are coil 2B. Position 105 is a phosphotyrosine (Tyr-105). Residues Ser-131, Ser-203, and Ser-215 each carry the phosphoserine modification. Residues 198 to 643 (STFSGSITGP…HAIVKEVTQS (446 aa)) form a tail region. Thr-217 carries O-linked (GlcNAc) threonine glycosylation. Phosphoserine is present on residues Ser-253 and Ser-269. Residues 270–582 (VKEEEKEEEA…GGDRSEEKVV (313 aa)) are disordered. Acidic residues predominate over residues 274–292 (EKEEEAEGKEEEQEAEEEV). Ser-298 is subject to Phosphoserine. The segment covering 308-328 (KEEEGEKEEEGQEEEEEEEDE) has biased composition (acidic residues). The span at 329 to 350 (GVKSDQAEEGGSEKEGSSKNEG) shows a compositional bias: basic and acidic residues. Ser-332, Ser-340, Ser-345, and Ser-346 each carry phosphoserine. The segment covering 351 to 368 (EQEEGETEAEGEVEEAEA) has biased composition (acidic residues). A Phosphothreonine modification is found at Thr-357. Residues 369–400 (KEEKKTEEKSEEVAAKEEPVTEAKVGKPEKAK) show a composition bias toward basic and acidic residues. A phosphoserine mark is found at Ser-401, Ser-406, Ser-442, and Ser-465. The segment covering 422-470 (GEQKEEEEKVEEEKKKAAKESPKEEKVEKKEEKPKDVPKKKAESPVKEE) has biased composition (basic and acidic residues). Residues 474-483 (EAATITKPTK) are compositionally biased toward low complexity. Over residues 485–508 (GLEKETKEGEKPLQQEKEKEKAGE) the composition is skewed to basic and acidic residues. A phosphoserine mark is found at Ser-512, Ser-550, and Ser-566. Residues 545–557 (TKEKGSGREEEKG) show a composition bias toward basic and acidic residues. A compositionally biased stretch (basic and acidic residues) spans 568-582 (ADEKKGGDRSEEKVV).

The protein belongs to the intermediate filament family. As to quaternary structure, forms heterodimers with NEFL; which can further hetero-oligomerize (in vitro). Forms heterodimers with INA (in vitro). There are a number of repeats of the tripeptide K-S-P, NFM is phosphorylated on a number of the serines in this motif. It is thought that phosphorylation of NFM results in the formation of interfilament cross bridges that are important in the maintenance of axonal caliber. In terms of processing, phosphorylation seems to play a major role in the functioning of the larger neurofilament polypeptides (NF-M and NF-H), the levels of phosphorylation being altered developmentally and coincidentally with a change in the neurofilament function. Post-translationally, phosphorylated in the head and rod regions by the PKC kinase PKN1, leading to the inhibition of polymerization.

It localises to the cytoplasm. The protein resides in the cytoskeleton. The protein localises to the cell projection. It is found in the axon. In terms of biological role, neurofilaments usually contain three intermediate filament proteins: NEFL, NEFM, and NEFH which are involved in the maintenance of neuronal caliber. May additionally cooperate with the neuronal intermediate filament proteins PRPH and INA to form neuronal filamentous networks. This is Neurofilament medium polypeptide (NEFM) from Oryctolagus cuniculus (Rabbit).